Reading from the N-terminus, the 164-residue chain is CDP-archaeol synthase (164 aa).

The next 4 membrane-spanning stretches (helical) occupy residues 3–23 (LLYFFLLIWPPYVANGSAVLA), 51–71 (YEGFLIGLSTGTFIGYAPNLL), 77–97 (LLDAFVLSIAALLGDLFGAFI), and 122–142 (LAVYTLYKDISVEYIIAAVII).

It belongs to the CDP-archaeol synthase family. Requires Mg(2+) as cofactor.

It is found in the cell membrane. The catalysed reaction is 2,3-bis-O-(geranylgeranyl)-sn-glycerol 1-phosphate + CTP + H(+) = CDP-2,3-bis-O-(geranylgeranyl)-sn-glycerol + diphosphate. It participates in membrane lipid metabolism; glycerophospholipid metabolism. Functionally, catalyzes the formation of CDP-2,3-bis-(O-geranylgeranyl)-sn-glycerol (CDP-archaeol) from 2,3-bis-(O-geranylgeranyl)-sn-glycerol 1-phosphate (DGGGP) and CTP. This reaction is the third ether-bond-formation step in the biosynthesis of archaeal membrane lipids. The protein is CDP-archaeol synthase of Pyrobaculum islandicum (strain DSM 4184 / JCM 9189 / GEO3).